Reading from the N-terminus, the 315-residue chain is MSPDLNCISSSLLRSEPCINSLIAILTVCGQQLFSSYTFSCPCQVGKNFYYGSAFLVVPALILLIAGYALRGQMWTVASEYCCCSCTPPYRRSSPLERRLACLMFFDITGRALVAPLTWLTVTLLTGTYYECAASEFASVDQYPMFANVTPSKREEMLAGFPCYTSAPSDVIPIRDEVALLHRYQSQMLGWILVVLATIALLLSKCLARCCSPLTSLQHHYWTNHLHNERVLFEKAAEEHSQLLIRHRIKKVFGFVPGSEDIKHIRIPSCQDWREISVPNLLCVGDTSQGPYSFLGDRVVEENEEDRQEGIEMKP.

Residues 1 to 14 are Cytoplasmic-facing; sequence MSPDLNCISSSLLR. A helical transmembrane segment spans residues 15–37; it reads SEPCINSLIAILTVCGQQLFSSY. At 38–48 the chain is on the extracellular side; sequence TFSCPCQVGKN. 2 disulfides stabilise this stretch: Cys-41–Cys-132 and Cys-43–Cys-163. A helical membrane pass occupies residues 49–71; the sequence is FYYGSAFLVVPALILLIAGYALR. Over 72-104 the chain is Cytoplasmic; that stretch reads GQMWTVASEYCCCSCTPPYRRSSPLERRLACLM. Residues 105 to 130 traverse the membrane as a helical segment; sequence FFDITGRALVAPLTWLTVTLLTGTYY. Residues 131-184 are Extracellular-facing; that stretch reads ECAASEFASVDQYPMFANVTPSKREEMLAGFPCYTSAPSDVIPIRDEVALLHRY. A helical transmembrane segment spans residues 185–208; that stretch reads QSQMLGWILVVLATIALLLSKCLA. Over 209–315 the chain is Cytoplasmic; sequence RCCSPLTSLQ…DRQEGIEMKP (107 aa).

Belongs to the CALHM family. Oligomerizes to form decameric and undecameric channels. Two hemichannels can assemble in a tail-to-tail manner to form a gap junction.

It localises to the cell membrane. May assemble to form gap junction channel-like structures involved in intercellular communication. Channel gating and ion conductance are likely regulated by membrane lipids rather than by membrane depolarization or extracellular calcium levels. The sequence is that of Calcium homeostasis modulator protein 4 from Mus musculus (Mouse).